Reading from the N-terminus, the 33-residue chain is MNIELALTLVSLVLVVSAGPLVVVLLSARGGNL.

The helical transmembrane segment at 5–25 (LALTLVSLVLVVSAGPLVVVL) threads the bilayer.

It belongs to the Psb30/Ycf12 family. In terms of assembly, PSII is composed of 1 copy each of membrane proteins PsbA, PsbB, PsbC, PsbD, PsbE, PsbF, PsbH, PsbI, PsbJ, PsbK, PsbL, PsbM, PsbT, PsbX, PsbY, PsbZ, Psb30/Ycf12, peripheral proteins of the oxygen-evolving complex and a large number of cofactors. It forms dimeric complexes.

The protein resides in the plastid. It localises to the chloroplast thylakoid membrane. A core subunit of photosystem II (PSII), required for optimal photosynthesis, probably helps stabilize the reaction center. The polypeptide is Photosystem II reaction center protein Psb30 (Chlamydomonas reinhardtii (Chlamydomonas smithii)).